Here is a 337-residue protein sequence, read N- to C-terminus: Probable tyrosine--tRNA ligase, cytoplasmic (337 aa).

Tyrosine 35 is a binding site for L-tyrosine. The 'HIGH' region motif lies at 40-48 (ITGKPHIAY). L-tyrosine-binding residues include tyrosine 162, glutamine 166, aspartate 169, and glutamine 184. A 'KMSKS' region motif is present at residues 218–222 (KMSSS).

It belongs to the class-I aminoacyl-tRNA synthetase family. In terms of assembly, homodimer.

It localises to the cytoplasm. The catalysed reaction is tRNA(Tyr) + L-tyrosine + ATP = L-tyrosyl-tRNA(Tyr) + AMP + diphosphate + H(+). This Encephalitozoon cuniculi (strain GB-M1) (Microsporidian parasite) protein is Probable tyrosine--tRNA ligase, cytoplasmic.